The primary structure comprises 298 residues: Inosose dehydratase (298 aa).

Belongs to the IolE/MocC family. The cofactor is glutathione. It depends on Co(2+) as a cofactor. Mn(2+) serves as cofactor.

The enzyme catalyses scyllo-inosose = 3D-3,5/4-trihydroxycyclohexane-1,2-dione + H2O. It participates in polyol metabolism; myo-inositol degradation into acetyl-CoA; acetyl-CoA from myo-inositol: step 2/7. Its function is as follows. Catalyzes the dehydration of inosose (2-keto-myo-inositol, 2KMI or 2,4,6/3,5-pentahydroxycyclohexanone) to 3D-(3,5/4)-trihydroxycyclohexane-1,2-dione (D-2,3-diketo-4-deoxy-epi-inositol). In Bacillus thuringiensis (strain Al Hakam), this protein is Inosose dehydratase.